The primary structure comprises 147 residues: Large-conductance mechanosensitive channel (147 aa).

The next 2 helical transmembrane spans lie at 8 to 28 and 81 to 101; these read FIMK…AAFG and GIFL…FMII.

Belongs to the MscL family. As to quaternary structure, homopentamer.

The protein resides in the cell inner membrane. Its function is as follows. Channel that opens in response to stretch forces in the membrane lipid bilayer. May participate in the regulation of osmotic pressure changes within the cell. The protein is Large-conductance mechanosensitive channel of Trichlorobacter lovleyi (strain ATCC BAA-1151 / DSM 17278 / SZ) (Geobacter lovleyi).